The primary structure comprises 166 residues: CDP-archaeol synthase (166 aa).

Transmembrane regions (helical) follow at residues 7–27 (LLLSILIYLPAFVANGSGPFI), 55–75 (LIVALTFGTTVGVIISKFFTA), 78–98 (TLISFLESLFAMIGDMIGAFI), 116–136 (LDFVLGASLILVLMRVNITWY), and 138–158 (FLFICGLAFFLHQGTNYVAYL).

Belongs to the CDP-archaeol synthase family. Mg(2+) serves as cofactor.

It localises to the cell membrane. The enzyme catalyses 2,3-bis-O-(geranylgeranyl)-sn-glycerol 1-phosphate + CTP + H(+) = CDP-2,3-bis-O-(geranylgeranyl)-sn-glycerol + diphosphate. It participates in membrane lipid metabolism; glycerophospholipid metabolism. Functionally, catalyzes the formation of CDP-2,3-bis-(O-geranylgeranyl)-sn-glycerol (CDP-archaeol) from 2,3-bis-(O-geranylgeranyl)-sn-glycerol 1-phosphate (DGGGP) and CTP. This reaction is the third ether-bond-formation step in the biosynthesis of archaeal membrane lipids. This chain is CDP-archaeol synthase, found in Saccharolobus islandicus (strain L.S.2.15 / Lassen #1) (Sulfolobus islandicus).